We begin with the raw amino-acid sequence, 567 residues long: Polyadenylate-binding protein-interacting protein 7 (567 aa).

The disordered stretch occupies residues 1–22 (MSLTKKASEPKLSGTSIKPTTL). Positions 13 to 22 (SGTSIKPTTL) are enriched in polar residues. A PAM2-like motif is present at residues 21-31 (TLNPHAAEFVP). A CUE domain is found at 215–259 (DMEVNPVDFLASQFPGFAAESLAEVYFANGCDLQLTIEMLTQLEL). Residues 355 to 387 (RNDSADSSIGSSRNSGAYKSGRGRSIYSDKLQS) are disordered. Positions 359–371 (ADSSIGSSRNSGA) are enriched in polar residues. Residues 485–567 (IDLHGLHVSE…QAGLLRVIIY (83 aa)) form the Smr domain.

Interacts with MPC and PAB2. Expressed in cauline leaves, stems, rosette leaves, immature siliques and primary inflorescences.

The sequence is that of Polyadenylate-binding protein-interacting protein 7 (CID7) from Arabidopsis thaliana (Mouse-ear cress).